A 37-amino-acid chain; its full sequence is Large ribosomal subunit protein bL36 (37 aa).

The protein belongs to the bacterial ribosomal protein bL36 family.

This chain is Large ribosomal subunit protein bL36, found in Thermus thermophilus (strain ATCC BAA-163 / DSM 7039 / HB27).